The primary structure comprises 367 residues: GMP synthase [glutamine-hydrolyzing] subunit B (367 aa).

The 189-residue stretch at 2–190 (FDPASFVEEI…LKLPKEISER (189 aa)) folds into the GMPS ATP-PPase domain. ATP is bound at residue 29-35 (SGGVDST).

Heterodimer composed of a glutamine amidotransferase subunit (A) and a GMP-binding subunit (B).

The enzyme catalyses XMP + L-glutamine + ATP + H2O = GMP + L-glutamate + AMP + diphosphate + 2 H(+). It functions in the pathway purine metabolism; GMP biosynthesis; GMP from XMP (L-Gln route): step 1/1. Its function is as follows. Catalyzes the synthesis of GMP from XMP. The chain is GMP synthase [glutamine-hydrolyzing] subunit B (guaAB) from Saccharolobus solfataricus (strain ATCC 35092 / DSM 1617 / JCM 11322 / P2) (Sulfolobus solfataricus).